The chain runs to 48 residues: ATP synthase protein 8 (48 aa).

Residues 12–32 (LLTGGILAISLLLYFVATYLL) traverse the membrane as a helical segment.

It belongs to the ATPase protein 8 family. F-type ATPases have 2 components, CF(1) - the catalytic core - and CF(0) - the membrane proton channel.

Its subcellular location is the mitochondrion membrane. Its function is as follows. Mitochondrial membrane ATP synthase (F(1)F(0) ATP synthase or Complex V) produces ATP from ADP in the presence of a proton gradient across the membrane which is generated by electron transport complexes of the respiratory chain. F-type ATPases consist of two structural domains, F(1) - containing the extramembraneous catalytic core and F(0) - containing the membrane proton channel, linked together by a central stalk and a peripheral stalk. During catalysis, ATP synthesis in the catalytic domain of F(1) is coupled via a rotary mechanism of the central stalk subunits to proton translocation. Part of the complex F(0) domain. Minor subunit located with subunit a in the membrane. This Candida parapsilosis (Yeast) protein is ATP synthase protein 8 (ATP8).